The primary structure comprises 118 residues: Large ribosomal subunit protein uL18 (118 aa).

Positions 1-22 (MISKPDKNKLRQKRHRRVRGKL) are disordered. A compositionally biased stretch (basic residues) spans 10-20 (LRQKRHRRVRG).

The protein belongs to the universal ribosomal protein uL18 family. Part of the 50S ribosomal subunit; part of the 5S rRNA/L5/L18/L25 subcomplex. Contacts the 5S and 23S rRNAs.

Its function is as follows. This is one of the proteins that bind and probably mediate the attachment of the 5S RNA into the large ribosomal subunit, where it forms part of the central protuberance. The polypeptide is Large ribosomal subunit protein uL18 (Streptococcus thermophilus (strain ATCC BAA-491 / LMD-9)).